Here is a 180-residue protein sequence, read N- to C-terminus: Ribonuclease M5 (180 aa).

The Toprim domain maps to 5-90; the sequence is KQIIIVEGKT…NAFIKKDDIS (86 aa). Glu11, Asp59, and Asp61 together coordinate Mg(2+).

The protein belongs to the ribonuclease M5 family. It depends on Mg(2+) as a cofactor.

Its subcellular location is the cytoplasm. The catalysed reaction is Endonucleolytic cleavage of RNA, removing 21 and 42 nucleotides, respectively, from the 5'- and 3'-termini of a 5S-rRNA precursor.. Required for correct processing of both the 5' and 3' ends of 5S rRNA precursor. Cleaves both sides of a double-stranded region yielding mature 5S rRNA in one step. This chain is Ribonuclease M5, found in Mycoplasma capricolum subsp. capricolum (strain California kid / ATCC 27343 / NCTC 10154).